Here is a 253-residue protein sequence, read N- to C-terminus: Sulfate transporter CysZ (253 aa).

Transmembrane regions (helical) follow at residues 31–51 (FVIL…WWLF), 75–95 (LLWP…FSTI), 151–171 (IVLL…PVLW), and 222–242 (IPVL…AMWV).

This sequence belongs to the CysZ family.

Its subcellular location is the cell inner membrane. Functionally, high affinity, high specificity proton-dependent sulfate transporter, which mediates sulfate uptake. Provides the sulfur source for the cysteine synthesis pathway. In Citrobacter koseri (strain ATCC BAA-895 / CDC 4225-83 / SGSC4696), this protein is Sulfate transporter CysZ.